Reading from the N-terminus, the 138-residue chain is Basic phospholipase A2 ammodytoxin A (138 aa).

The N-terminal stretch at 1–16 is a signal peptide; it reads MRTLWIVAVCLIGVEG. Disulfide bonds link Cys42–Cys131, Cys44–Cys60, Cys59–Cys111, Cys65–Cys138, Cys66–Cys104, Cys73–Cys97, and Cys91–Cys102. Residues Tyr43, Gly45, and Gly47 each contribute to the Ca(2+) site. His63 is an active-site residue. Residue Asp64 coordinates Ca(2+). The active site involves Asp105.

Belongs to the phospholipase A2 family. Group II subfamily. D49 sub-subfamily. As to quaternary structure, monomer. Binds to calmodulin, coagulation factor X (F10), M-type PLA2 receptor (R-180). May also bind to 14-3-3 proteins gamma (YWHAG) and epsilon (YWHAE), and R25, a mitochondrial membrane protein. It depends on Ca(2+) as a cofactor. As to expression, expressed by the venom gland.

The protein localises to the secreted. Its subcellular location is the host cytoplasm. It localises to the host cytosol. It catalyses the reaction a 1,2-diacyl-sn-glycero-3-phosphocholine + H2O = a 1-acyl-sn-glycero-3-phosphocholine + a fatty acid + H(+). Functionally, snake venom phospholipase A2 (PLA2) that acts as a presynaptic neurotoxin, an inhibitor of blood coagulation, and has been found to bind with high affinity to intracellular proteins. The response of indirectly stimulated neuromuscular preparations to ammodytoxin (Atx) is triphasic. The first phase, the transient inhibition of the acetylcholine (ACh) release, starts soon after the addition of Atx and lasts for several minutes. This phase is probably independent of Atx enzymatic activity. The effect may be due to the specific binding of the toxin to presynaptic receptors. These receptors, called N-type receptors, are still unidentified. It is noteworthy that a neuronal isoform of the M-type PLA2 receptor (R180) has been identified as a high-affinity receptor for Atx in neuronal plasma membranes. It was demonstrated however that this receptor is not essential for expression of neurotoxicity by Atx. The second phase corresponds to an augmentation of neurotransmitter release. A peak is reached 10-20 minutes after exposure of the preparation to Atx and is followed by a gradual reduction. In this phase, the enzymatic activity of Atx of the mammalian is not significant. It is speculated that the increased release of neurotransmitter in this phase is induced by the interference of Atx with voltage-gated potassium channels. Measurements of ionic currents showed however that voltage-gated potassium channels are not affected by Atx. The third phase of the response of neuromuscular preparations to Atx, which corresponds to a complete and irreversible paralysis, is clearly dependent on the hydrolytic activity of the toxin. In addition to its presynaptic neurotoxicity, Atx shows an anticoagulant activity by binding with high affinity to activated coagulation factor X (F10) thus inhibiting the formation of the prothrombinase complex (FX/FV) and its activity (IC(50) is 20 nM). Surprisingly, Atx was discovered to bind intracellular proteins such as calmodulin (CaM) (IC(50) is 6 nM), 14-3-3 proteins gamma (YWHAG) and epsilon (YWHAE) (by similarity with AtxC), as well as R25 (by similarity with AtxC), a mitochondrial integral membrane protein found in cerebral cortex. These findings raised a doubt about the dogma of the exclusively extracellular action of PLA2s, defended by the potential instability of these molecules in the reducing environment of the eukaryotic cytosol coupled with their possible inability to act as enzymes in this cellular compartment, due to too low concentration of calcium ions. This hypothesis was challenged efficiently by demonstrating the internalization of AtxA into a culture cells, but still remains to be directly demonstrated in vivo. PLA2 catalyzes the calcium-dependent hydrolysis of the 2-acyl groups in 3-sn-phosphoglycerides. This is Basic phospholipase A2 ammodytoxin A from Vipera ammodytes ammodytes (Western sand viper).